Here is a 219-residue protein sequence, read N- to C-terminus: MKLTKFLTVFIPFIAGLIYYIQKYHLRSFYQFDPAKLQELSKQSIALYANDTKALLYDLSDRLVAEYGDLITPVNQDEWVHNNAGGAMGTMFILHASFSEYLIFFGTPIGTEGHSGVHMADDYFTILRGRQLAASANDLEARVYLPGDQHVHPWGHTAQYSMPSGEPCFALELAQGWIVSMLPFGFMDGLFSTIDFGTLYKTVYFTAGRMLKSVLMGKF.

The chain crosses the membrane as a helical span at residues 1 to 21; it reads MKLTKFLTVFIPFIAGLIYYI.

This sequence belongs to the ERG2 family.

The protein localises to the endoplasmic reticulum membrane. The catalysed reaction is fecosterol = episterol. It participates in steroid metabolism; ergosterol biosynthesis. C-8 sterol isomerase; part of the third module of ergosterol biosynthesis pathway that includes by the late steps of the pathway. Erg2 catalyzes the reaction which results in unsaturation at C-7 in the B ring of sterols and thus converts fecosterol to episterol. The third module or late pathway involves the ergosterol synthesis itself through consecutive reactions that mainly occur in the endoplasmic reticulum (ER) membrane. Firstly, the squalene synthase erg9 catalyzes the condensation of 2 farnesyl pyrophosphate moieties to form squalene, which is the precursor of all steroids. Secondly, squalene is converted into lanosterol by the consecutive action of the squalene epoxidase erg1 and the lanosterol synthase erg7. The lanosterol 14-alpha-demethylase erg11/cyp1 catalyzes C14-demethylation of lanosterol to produce 4,4'-dimethyl cholesta-8,14,24-triene-3-beta-ol. In the next steps, a complex process involving various demethylation, reduction and desaturation reactions catalyzed by the C-14 reductase erg24 and the C-4 demethylation complex erg25-erg26-erg27 leads to the production of zymosterol. Erg28 likely functions in the C-4 demethylation complex reaction by tethering erg26 and Erg27 to the endoplasmic reticulum or to facilitate interaction between these proteins. Then, the sterol 24-C-methyltransferase erg6 catalyzes the methyl transfer from S-adenosyl-methionine to the C-24 of zymosterol to form fecosterol. The C-8 sterol isomerase erg2 catalyzes the reaction which results in unsaturation at C-7 in the B ring of sterols and thus converts fecosterol to episterol. The sterol-C5-desaturases erg31 and erg32 then catalyze the introduction of a C-5 double bond in the B ring to produce 5-dehydroepisterol. The C-22 sterol desaturase erg5 further converts 5-dehydroepisterol into ergosta-5,7,22,24(28)-tetraen-3beta-ol by forming the C-22(23) double bond in the sterol side chain. Finally, ergosta-5,7,22,24(28)-tetraen-3beta-ol is substrate of the C-24(28) sterol reductase erg4 to produce ergosterol. In the genus Schizosaccharomyces, a second route exists between lanosterol and fecosterol, via the methylation of lanosterol to eburicol by erg6, followed by C14-demethylation by erg11/cyp1 and C4-demethylation by the demethylation complex erg25-erg26-erg27. The protein is C-8 sterol isomerase erg2 of Schizosaccharomyces pombe (strain 972 / ATCC 24843) (Fission yeast).